The sequence spans 224 residues: Putative adhesin A1C_06425 (224 aa).

A signal peptide spans 1–22 (MKKLLLIATTSATILSSSISFA).

The sequence is that of Putative adhesin A1C_06425 from Rickettsia akari (strain Hartford).